The following is a 357-amino-acid chain: MDDLKAKYLGQIAEATDENALEAVRLAAVGKKGEVALKMRELGKMTPEERQVAGPALNALKDEINAALAAKKAALGDAALDERLRSEWLDVTLPTRPRRQGSIHPISQASEELTAIFAEMGFSAQEGPRVDTDWYNFDALNIPGHHPARAEMDTFYMHRAEGDDRPPHVLRTHTSPVQIRSMEKLGAPLRIICPGGVYRADYDQTHTPMFHQVEGLALDENISMANLKWVLEEFVKSFFEVDEVELRFRASHFPFTEPSAEVDIRCSWDNGQLKIGEGDDWLEILGSGMVHPKVIAAGGIDPEKYQGFAFGIGIDRLAMLKYGIPDLRAFFESDLRWLRHYGFSCLDVPTLHGGLSR.

Glu-257 contributes to the Mg(2+) binding site.

The protein belongs to the class-II aminoacyl-tRNA synthetase family. Phe-tRNA synthetase alpha subunit type 1 subfamily. As to quaternary structure, tetramer of two alpha and two beta subunits. The cofactor is Mg(2+).

Its subcellular location is the cytoplasm. It carries out the reaction tRNA(Phe) + L-phenylalanine + ATP = L-phenylalanyl-tRNA(Phe) + AMP + diphosphate + H(+). The chain is Phenylalanine--tRNA ligase alpha subunit from Ruegeria sp. (strain TM1040) (Silicibacter sp.).